The primary structure comprises 603 residues: Putative lipase atg15 (603 aa).

Topologically, residues 1–20 are cytoplasmic; it reads MDQPHRRTRKWHLMDLSVST. Residues 21-41 traverse the membrane as a helical; Signal-anchor for type II membrane protein segment; sequence LLMSLALVLPSCVSAYQPVYF. Over 42–603 the chain is Lumenal; the sequence is RSQEATPFIP…ITPAPILIDL (562 aa). N-linked (GlcNAc...) asparagine glycosylation is found at asparagine 166, asparagine 201, asparagine 223, asparagine 281, and asparagine 305. Catalysis depends on serine 321, which acts as the Charge relay system. N-linked (GlcNAc...) asparagine glycosylation is present at asparagine 467.

The protein belongs to the AB hydrolase superfamily. Lipase family. As to quaternary structure, binds to both phosphatidylinositol (PI) and phosphatidylinositol 3,5-bisphosphate (PIP2).

Its subcellular location is the endosome. It localises to the multivesicular body membrane. The protein resides in the prevacuolar compartment membrane. The catalysed reaction is a triacylglycerol + H2O = a diacylglycerol + a fatty acid + H(+). In terms of biological role, lipase which is essential for lysis of subvacuolar cytoplasm to vacuole targeted bodies and intravacuolar autophagic bodies. Involved in the lysis of intravacuolar multivesicular body (MVB) vesicles. The intravacuolar membrane disintegration by atg15 is critical to life span extension. The protein is Putative lipase atg15 (atg15) of Emericella nidulans (strain FGSC A4 / ATCC 38163 / CBS 112.46 / NRRL 194 / M139) (Aspergillus nidulans).